Here is a 1107-residue protein sequence, read N- to C-terminus: Lon protease homolog, mitochondrial (1107 aa).

A mitochondrion-targeting transit peptide spans 1–31 (MLSRQRIPRILASRTSLAHSIRSFTSTTSSI). Disordered regions lie at residues 32–152 (RPVA…PGDK) and 273–329 (PEAA…PYEP). The span at 51–60 (TNLSSFSTYT) shows a compositional bias: polar residues. Positions 80-101 (EEERKANVEHAEAEAKEAESKQ) are enriched in basic and acidic residues. The span at 122–141 (GAAGGSSAGSGSGADGGSGD) shows a compositional bias: gly residues. Positions 142–152 (GGKRGRKPGDK) are enriched in basic and acidic residues. The Lon N-terminal domain maps to 166–441 (VMAIPIAKRP…KALLVLKKEH (276 aa)). Position 594 to 601 (594 to 601 (GPPGVGKT)) interacts with ATP. The tract at residues 808-858 (PESEALTEEGKAAQEETEKKKSEEAASGETSSPKAATEASEKETTEKPRVA) is disordered. A compositionally biased stretch (basic and acidic residues) spans 815-831 (EEGKAAQEETEKKKSEE). Positions 832-845 (AASGETSSPKAATE) are enriched in low complexity. Residues 846–856 (ASEKETTEKPR) are compositionally biased toward basic and acidic residues. A Lon proteolytic domain is found at 891-1077 (VTPPGVTMGL…SEVFDLIFPK (187 aa)). Active-site residues include Ser983 and Lys1026. The interval 1085–1107 (KSRIIEDDKSEKEESKKKNDDDE) is disordered.

This sequence belongs to the peptidase S16 family. In terms of assembly, homohexamer or homoheptamer. Organized in a ring with a central cavity.

It localises to the mitochondrion matrix. The catalysed reaction is Hydrolysis of proteins in presence of ATP.. Its function is as follows. ATP-dependent serine protease that mediates the selective degradation of misfolded, unassembled or oxidatively damaged polypeptides as well as certain short-lived regulatory proteins in the mitochondrial matrix. May also have a chaperone function in the assembly of inner membrane protein complexes. Participates in the regulation of mitochondrial gene expression and in the maintenance of the integrity of the mitochondrial genome. Binds to mitochondrial DNA in a site-specific manner. This is Lon protease homolog, mitochondrial (pim1) from Neurospora crassa (strain ATCC 24698 / 74-OR23-1A / CBS 708.71 / DSM 1257 / FGSC 987).